Consider the following 184-residue polypeptide: Transcription termination/antitermination protein NusG (184 aa).

The protein belongs to the NusG family.

Participates in transcription elongation, termination and antitermination. In Borreliella burgdorferi (strain ATCC 35210 / DSM 4680 / CIP 102532 / B31) (Borrelia burgdorferi), this protein is Transcription termination/antitermination protein NusG.